Consider the following 437-residue polypeptide: Enolase (437 aa).

Position 162 (glutamine 162) interacts with (2R)-2-phosphoglycerate. The active-site Proton donor is the glutamate 204. Mg(2+)-binding residues include aspartate 251, glutamate 297, and aspartate 324. (2R)-2-phosphoglycerate contacts are provided by lysine 349, arginine 378, serine 379, and lysine 400. Residue lysine 349 is the Proton acceptor of the active site.

It belongs to the enolase family. It depends on Mg(2+) as a cofactor.

Its subcellular location is the cytoplasm. It is found in the secreted. It localises to the cell surface. It carries out the reaction (2R)-2-phosphoglycerate = phosphoenolpyruvate + H2O. Its pathway is carbohydrate degradation; glycolysis; pyruvate from D-glyceraldehyde 3-phosphate: step 4/5. Functionally, catalyzes the reversible conversion of 2-phosphoglycerate (2-PG) into phosphoenolpyruvate (PEP). It is essential for the degradation of carbohydrates via glycolysis. In Chlorobium phaeobacteroides (strain DSM 266 / SMG 266 / 2430), this protein is Enolase.